Consider the following 455-residue polypeptide: Bifunctional protein GlmU (455 aa).

Residues 1-232 (MASTTGALIL…DPNLLGVNNP (232 aa)) are pyrophosphorylase. UDP-N-acetyl-alpha-D-glucosamine contacts are provided by residues 10-13 (LAAG), lysine 24, glutamine 75, and 80-81 (GT). Aspartate 106 lines the Mg(2+) pocket. 4 residues coordinate UDP-N-acetyl-alpha-D-glucosamine: glycine 141, glutamate 155, asparagine 172, and asparagine 230. Residue asparagine 230 participates in Mg(2+) binding. A linker region spans residues 233-253 (AELIRSEALLRTRLVIGHIEG). Positions 254–455 (GVLIHAPETV…QTNLPRKPKA (202 aa)) are N-acetyltransferase. 2 residues coordinate UDP-N-acetyl-alpha-D-glucosamine: arginine 336 and lysine 354. The active-site Proton acceptor is the histidine 366. Positions 369 and 380 each coordinate UDP-N-acetyl-alpha-D-glucosamine. Residues alanine 383, 389-390 (NY), serine 408, alanine 426, and arginine 443 contribute to the acetyl-CoA site.

The protein in the N-terminal section; belongs to the N-acetylglucosamine-1-phosphate uridyltransferase family. In the C-terminal section; belongs to the transferase hexapeptide repeat family. Homotrimer. Mg(2+) is required as a cofactor.

The protein resides in the cytoplasm. It carries out the reaction alpha-D-glucosamine 1-phosphate + acetyl-CoA = N-acetyl-alpha-D-glucosamine 1-phosphate + CoA + H(+). It catalyses the reaction N-acetyl-alpha-D-glucosamine 1-phosphate + UTP + H(+) = UDP-N-acetyl-alpha-D-glucosamine + diphosphate. The protein operates within nucleotide-sugar biosynthesis; UDP-N-acetyl-alpha-D-glucosamine biosynthesis; N-acetyl-alpha-D-glucosamine 1-phosphate from alpha-D-glucosamine 6-phosphate (route II): step 2/2. It functions in the pathway nucleotide-sugar biosynthesis; UDP-N-acetyl-alpha-D-glucosamine biosynthesis; UDP-N-acetyl-alpha-D-glucosamine from N-acetyl-alpha-D-glucosamine 1-phosphate: step 1/1. It participates in bacterial outer membrane biogenesis; LPS lipid A biosynthesis. Functionally, catalyzes the last two sequential reactions in the de novo biosynthetic pathway for UDP-N-acetylglucosamine (UDP-GlcNAc). The C-terminal domain catalyzes the transfer of acetyl group from acetyl coenzyme A to glucosamine-1-phosphate (GlcN-1-P) to produce N-acetylglucosamine-1-phosphate (GlcNAc-1-P), which is converted into UDP-GlcNAc by the transfer of uridine 5-monophosphate (from uridine 5-triphosphate), a reaction catalyzed by the N-terminal domain. In Nitratidesulfovibrio vulgaris (strain DP4) (Desulfovibrio vulgaris), this protein is Bifunctional protein GlmU.